Reading from the N-terminus, the 592-residue chain is N-acetyltransferase ESCO2 (592 aa).

Serine 41 and serine 85 each carry phosphoserine. A disordered region spans residues 267–294 (KSSVKVQNARSKNEEKLRKNPSGAVVSS). At serine 309 the chain carries Phosphoserine. The segment at 384-408 (TVCKSCGMIYTASNPEDEIQHLQHH) adopts a CCHH-type zinc-finger fold.

The protein belongs to the acetyltransferase family. ECO subfamily.

The protein resides in the nucleus. It localises to the chromosome. The catalysed reaction is L-lysyl-[protein] + acetyl-CoA = N(6)-acetyl-L-lysyl-[protein] + CoA + H(+). Its function is as follows. Acetyltransferase required for the establishment of sister chromatid cohesion. Couples the processes of cohesion and DNA replication to ensure that only sister chromatids become paired together. In contrast to the structural cohesins, the deposition and establishment factors are required only during the S phase. Acetylates the cohesin component SMC3. The sequence is that of N-acetyltransferase ESCO2 (Esco2) from Mus musculus (Mouse).